The sequence spans 158 residues: NADH-quinone oxidoreductase subunit B (158 aa).

Positions 36, 37, 101, and 131 each coordinate [4Fe-4S] cluster.

Belongs to the complex I 20 kDa subunit family. In terms of assembly, NDH-1 is composed of 14 different subunits. Subunits NuoB, C, D, E, F, and G constitute the peripheral sector of the complex. It depends on [4Fe-4S] cluster as a cofactor.

The protein resides in the cell inner membrane. It catalyses the reaction a quinone + NADH + 5 H(+)(in) = a quinol + NAD(+) + 4 H(+)(out). Functionally, NDH-1 shuttles electrons from NADH, via FMN and iron-sulfur (Fe-S) centers, to quinones in the respiratory chain. The immediate electron acceptor for the enzyme in this species is believed to be ubiquinone. Couples the redox reaction to proton translocation (for every two electrons transferred, four hydrogen ions are translocated across the cytoplasmic membrane), and thus conserves the redox energy in a proton gradient. The sequence is that of NADH-quinone oxidoreductase subunit B from Francisella philomiragia subsp. philomiragia (strain ATCC 25017 / CCUG 19701 / FSC 153 / O#319-036).